The chain runs to 448 residues: Phosphoglucosamine mutase (448 aa).

The Phosphoserine intermediate role is filled by Ser-100. The Mg(2+) site is built by Ser-100, Asp-240, Asp-242, and Asp-244. Position 100 is a phosphoserine (Ser-100).

The protein belongs to the phosphohexose mutase family. Requires Mg(2+) as cofactor. In terms of processing, activated by phosphorylation.

It carries out the reaction alpha-D-glucosamine 1-phosphate = D-glucosamine 6-phosphate. Catalyzes the conversion of glucosamine-6-phosphate to glucosamine-1-phosphate. The sequence is that of Phosphoglucosamine mutase from Clostridium acetobutylicum (strain ATCC 824 / DSM 792 / JCM 1419 / IAM 19013 / LMG 5710 / NBRC 13948 / NRRL B-527 / VKM B-1787 / 2291 / W).